Consider the following 478-residue polypeptide: DNA gyrase subunit B (478 aa).

The 120-residue stretch at 319 to 438 (CELYLVEGDS…GGHVYIAQPP (120 aa)) folds into the Toprim domain. Residues Glu-325, Asp-403, and Asp-405 each contribute to the Mg(2+) site.

The protein belongs to the type II topoisomerase GyrB family. Heterotetramer, composed of two GyrA and two GyrB chains. In the heterotetramer, GyrA contains the active site tyrosine that forms a transient covalent intermediate with DNA, while GyrB binds cofactors and catalyzes ATP hydrolysis. The cofactor is Mg(2+). Mn(2+) is required as a cofactor. Ca(2+) serves as cofactor.

The protein localises to the cytoplasm. It carries out the reaction ATP-dependent breakage, passage and rejoining of double-stranded DNA.. Its function is as follows. A type II topoisomerase that negatively supercoils closed circular double-stranded (ds) DNA in an ATP-dependent manner to modulate DNA topology and maintain chromosomes in an underwound state. Negative supercoiling favors strand separation, and DNA replication, transcription, recombination and repair, all of which involve strand separation. Also able to catalyze the interconversion of other topological isomers of dsDNA rings, including catenanes and knotted rings. Type II topoisomerases break and join 2 DNA strands simultaneously in an ATP-dependent manner. This Cytophaga hutchinsonii protein is DNA gyrase subunit B (gyrB).